We begin with the raw amino-acid sequence, 1669 residues long: Dystrophin, isoform B (1669 aa).

A compositionally biased stretch (pro residues) spans 1-11; the sequence is MTAKPPPPIPP. 5 disordered regions span residues 1–28, 43–243, 327–356, 389–417, and 481–508; these read MTAK…LAPE, RGQQ…SEDA, RAQA…RSTI, GGGG…MPLS, and SGAL…NSSG. A compositionally biased stretch (polar residues) spans 53-62; it reads SQEQHATNTL. Pro residues predominate over residues 118 to 131; that stretch reads GLPPTMRQPPPLPR. Low complexity predominate over residues 132 to 147; that stretch reads KPASTQSSAQNSAQSS. The span at 153–166 shows a compositional bias: basic and acidic residues; that stretch reads KFKDKPPPPPEKHS. Composition is skewed to low complexity over residues 328 to 347 and 396 to 405; these read AQAQ…SNSQ and STGNAVANSG. Positions 485–500 are enriched in basic and acidic residues; sequence SREELRMRRRSSHDET. Spectrin repeat units follow at residues 541–643, 650–747, 754–883, and 890–990; these read QRFE…KQLH, QSFD…NRLE, NALL…HRLD, and RQFQ…KVLC. The segment at 827 to 851 is disordered; the sequence is VSDTSDTEANHDSDSRYMSAEEQSR. Residues 994–1024 form a disordered region; that stretch reads AQQTHENGDDGRTTSNSGTIGPLPNLGQSVK. One can recognise a WW domain in the interval 1021 to 1054; sequence QSVKPPWERATTAANVPYYIDHERETTHWDHPEM. A ZZ-type zinc finger spans residues 1279-1335; that stretch reads KHQAKCNICKEYPIVGFRYRCLKCFNFDMCQKCFFFGRNAKNHKLTHPMHEYCTTTT. Residues Cys-1284, Cys-1287, Cys-1299, Cys-1302, Cys-1308, Cys-1311, His-1321, and His-1325 each contribute to the Zn(2+) site. Ser-1379 is modified (phosphoserine). 2 disordered regions span residues 1488–1516 and 1559–1669; these read EQSG…GEQG and DEPN…ELQK. Polar residues-rich tracts occupy residues 1497 to 1509 and 1580 to 1611; these read NGMQ…MTGL and ALNS…QQNG. The span at 1630-1641 shows a compositional bias: acidic residues; that stretch reads QELESINDDLED. Residues 1642 to 1660 show a composition bias toward low complexity; the sequence is SSSSNTTNTTTTTTTTATT.

In terms of assembly, component of the dystrophin associated protein complex (DAPC). Interacts with Dg, via the Dg WW domain binding sites. In terms of tissue distribution, expressed in neuronally derived tissues, mainly the CNS and the brain of stage 16 embryos. Lower level expression is seen in the sensory organs. Expression is absent from the musculature. In larvae, expression is predominant throughout the neuropil and brain and in the eye antennal disks.

It is found in the cell membrane. The protein localises to the sarcolemma. It localises to the cytoplasm. The protein resides in the cytoskeleton. In terms of biological role, required for the maintenance of appropriate synaptic retrograde communication and the stabilization of muscle cell architecture or physiology. May play a role in anchoring the cytoskeleton to the plasma membrane. In Drosophila melanogaster (Fruit fly), this protein is Dystrophin, isoform B (Dys).